The sequence spans 135 residues: Small ribosomal subunit protein uS11 (135 aa).

The protein belongs to the universal ribosomal protein uS11 family. As to quaternary structure, part of the 30S ribosomal subunit. Interacts with proteins S7 and S18. Binds to IF-3.

Located on the platform of the 30S subunit, it bridges several disparate RNA helices of the 16S rRNA. Forms part of the Shine-Dalgarno cleft in the 70S ribosome. This Cutibacterium acnes (strain DSM 16379 / KPA171202) (Propionibacterium acnes) protein is Small ribosomal subunit protein uS11.